The sequence spans 227 residues: Thymidylate kinase (227 aa).

Residue 7-14 (GIEGSGKT) participates in ATP binding.

The protein belongs to the thymidylate kinase family.

The enzyme catalyses dTMP + ATP = dTDP + ADP. Its function is as follows. Phosphorylation of dTMP to form dTDP in both de novo and salvage pathways of dTTP synthesis. This is Thymidylate kinase from Desulforapulum autotrophicum (strain ATCC 43914 / DSM 3382 / VKM B-1955 / HRM2) (Desulfobacterium autotrophicum).